The sequence spans 147 residues: 3-hydroxyacyl-[acyl-carrier-protein] dehydratase FabZ (147 aa).

The active site involves histidine 46.

It belongs to the thioester dehydratase family. FabZ subfamily.

The protein resides in the cytoplasm. The catalysed reaction is a (3R)-hydroxyacyl-[ACP] = a (2E)-enoyl-[ACP] + H2O. Involved in unsaturated fatty acids biosynthesis. Catalyzes the dehydration of short chain beta-hydroxyacyl-ACPs and long chain saturated and unsaturated beta-hydroxyacyl-ACPs. The sequence is that of 3-hydroxyacyl-[acyl-carrier-protein] dehydratase FabZ from Syntrophobacter fumaroxidans (strain DSM 10017 / MPOB).